A 377-amino-acid polypeptide reads, in one-letter code: Histidinol-phosphate aminotransferase (377 aa).

Lys232 bears the N6-(pyridoxal phosphate)lysine mark.

The protein belongs to the class-II pyridoxal-phosphate-dependent aminotransferase family. Histidinol-phosphate aminotransferase subfamily. Homodimer. Pyridoxal 5'-phosphate is required as a cofactor.

It carries out the reaction L-histidinol phosphate + 2-oxoglutarate = 3-(imidazol-4-yl)-2-oxopropyl phosphate + L-glutamate. It participates in amino-acid biosynthesis; L-histidine biosynthesis; L-histidine from 5-phospho-alpha-D-ribose 1-diphosphate: step 7/9. In Mycobacterium sp. (strain KMS), this protein is Histidinol-phosphate aminotransferase.